Here is a 997-residue protein sequence, read N- to C-terminus: Chromosomal passenger complex protein bir1 (997 aa).

BIR repeat units follow at residues Arg-25–Tyr-99 and Arg-120–Thr-194. The Zn(2+) site is built by Cys-163, Cys-166, His-183, and Cys-190. 5 disordered regions span residues Glu-217–Gly-329, Thr-370–Glu-527, Thr-682–Glu-701, Ser-755–Ala-782, and Arg-817–Val-838. The segment covering Thr-240–Asn-252 has biased composition (polar residues). Over residues Pro-288–Lys-299 the composition is skewed to basic residues. A compositionally biased stretch (acidic residues) spans Ser-311–Leu-320. Residues Thr-370 to Ser-392 are compositionally biased toward polar residues. Low complexity predominate over residues Ser-408–Val-423. Over residues Glu-426–Leu-451 the composition is skewed to basic and acidic residues. 2 stretches are compositionally biased toward polar residues: residues Lys-463 to Asp-476 and Arg-485 to Ile-512. The span at Pro-756–Glu-772 shows a compositional bias: polar residues. A compositionally biased stretch (basic and acidic residues) spans Thr-773–Ala-782. A compositionally biased stretch (polar residues) spans Arg-817–Asn-830.

In terms of assembly, component of the CPC complex at least composed of ark1, bir1 and pic1. Interacts with the mitotic checkpoint complex (MCC) subunit mad3. In terms of processing, phosphorylated by ark1.

The protein resides in the nucleus. It localises to the cytoplasm. Its subcellular location is the cytoskeleton. It is found in the spindle. The protein localises to the chromosome. The protein resides in the centromere. Component of the chromosomal passenger complex (CPC), a complex that acts as a key regulator of chromosome segregation and cytokinesis. Has a role in chromosome segregation by recruiting condensin and ark1 kinase to appropriate sites as the cell progresses through mitosis. Ark1 activity depends upon bir1 function and phosphorylation. Ark1 with bir1 function is required for full-scale association with kinetochores and formation of a complex with mad3. The sequence is that of Chromosomal passenger complex protein bir1 (bir1) from Schizosaccharomyces pombe (strain 972 / ATCC 24843) (Fission yeast).